Consider the following 313-residue polypeptide: Putative adhesin P1-like protein MPN_202 (313 aa).

Over residues 1–16 the composition is skewed to low complexity; sequence MGSQNQGSTTTTSAGN. The disordered stretch occupies residues 1–44; that stretch reads MGSQNQGSTTTTSAGNPDSLVTDKVDQKGQVQTSGQNLSDTNYT. Over residues 29 to 44 the composition is skewed to polar residues; it reads GQVQTSGQNLSDTNYT.

Belongs to the adhesin P1 family.

This chain is Putative adhesin P1-like protein MPN_202, found in Mycoplasma pneumoniae (strain ATCC 29342 / M129 / Subtype 1) (Mycoplasmoides pneumoniae).